Consider the following 390-residue polypeptide: GTPase Obg (390 aa).

Residues 1–159 enclose the Obg domain; that stretch reads MKFVDEATIK…RELRLELLLL (159 aa). One can recognise an OBG-type G domain in the interval 160–333; sequence ADVGMLGLPN…LCDELADFMD (174 aa). Residues 166-173, 191-195, 213-216, 283-286, and 314-316 contribute to the GTP site; these read GLPNAGKS, FTTLI, DIPG, NKTD, and AAV. Ser173 and Thr193 together coordinate Mg(2+).

Belongs to the TRAFAC class OBG-HflX-like GTPase superfamily. OBG GTPase family. Monomer. The cofactor is Mg(2+).

The protein localises to the cytoplasm. An essential GTPase which binds GTP, GDP and possibly (p)ppGpp with moderate affinity, with high nucleotide exchange rates and a fairly low GTP hydrolysis rate. Plays a role in control of the cell cycle, stress response, ribosome biogenesis and in those bacteria that undergo differentiation, in morphogenesis control. The polypeptide is GTPase Obg (Aliivibrio fischeri (strain MJ11) (Vibrio fischeri)).